Here is a 216-residue protein sequence, read N- to C-terminus: Sarcospan (216 aa).

Topologically, residues 1–26 (MGRKPSPRAQELPEEEARTCCGCRFP) are cytoplasmic. A helical membrane pass occupies residues 27-47 (LLLALLQLALGIAVTVLGFLM). Over 48 to 59 (ASISPSLLVRDT) the chain is Extracellular. A helical membrane pass occupies residues 60 to 80 (PFWAGSIVCVVAYLGLFMLCV). The Cytoplasmic segment spans residues 81-95 (SYQVDERTCVQFSMK). A helical transmembrane segment spans residues 96-116 (VFYFLLSALGLMVCMLAVAFA). Residues 117–166 (AHHYSLLAQFTCETSLDSCQCKLPSSEPLSRAFVYRDVTDCTSVTGTFKL) lie on the Extracellular side of the membrane. A helical membrane pass occupies residues 167-187 (FLIIQMVLNLVCGLVCLLACF). The Cytoplasmic portion of the chain corresponds to 188 to 216 (VMWKHRYQVFYVGVGLRSLMASDGQLPKA).

It is found in the cell membrane. The protein localises to the sarcolemma. The protein resides in the postsynaptic cell membrane. In terms of biological role, component of the dystrophin-glycoprotein complex (DGC), a complex that spans the muscle plasma membrane and forms a link between the F-actin cytoskeleton and the extracellular matrix. Preferentially associates with the sarcoglycan subcomplex of the DGC. This is Sarcospan (Sspn) from Mus musculus (Mouse).